The following is a 393-amino-acid chain: Major outer membrane porin, serovar L1 (393 aa).

The signal sequence occupies residues 1 to 22; sequence MKKLLKSVLVFAALSSASSLQA.

Belongs to the chlamydial porin (CP) (TC 1.B.2) family. As to quaternary structure, part of a disulfide cross-linked outer membrane complex (COMC) composed of the major outer membrane porin (MOMP), the small cysteine-rich protein (OmcA) and the large cysteine-rich periplasmic protein (OmcB).

It localises to the cell outer membrane. In elementary bodies (EBs, the infectious stage, which is able to survive outside the host cell) provides the structural integrity of the outer envelope through disulfide cross-links with the small cysteine-rich protein and the large cysteine-rich periplasmic protein. It has been described in publications as the Sarkosyl-insoluble COMC (Chlamydia outer membrane complex), and serves as the functional equivalent of peptidoglycan. In terms of biological role, permits diffusion of specific solutes through the outer membrane. This chain is Major outer membrane porin, serovar L1 (ompA), found in Chlamydia trachomatis.